The primary structure comprises 369 residues: S-adenosylmethionine decarboxylase proenzyme 2 (369 aa).

Residues Glu-9 and Glu-12 contribute to the active site. Ser-69 (schiff-base intermediate with substrate; via pyruvic acid) is an active-site residue. Ser-69 is modified (pyruvic acid (Ser); by autocatalysis). The Proton donor; for catalytic activity role is filled by Cys-83. Catalysis depends on proton acceptor; for processing activity residues Ser-236 and His-249.

The protein belongs to the eukaryotic AdoMetDC family. Pyruvate serves as cofactor. Is synthesized initially as an inactive proenzyme. Formation of the active enzyme involves a self-maturation process in which the active site pyruvoyl group is generated from an internal serine residue via an autocatalytic post-translational modification. Two non-identical subunits are generated from the proenzyme in this reaction, and the pyruvate is formed at the N-terminus of the alpha chain, which is derived from the carboxyl end of the proenzyme. The post-translation cleavage follows an unusual pathway, termed non-hydrolytic serinolysis, in which the side chain hydroxyl group of the serine supplies its oxygen atom to form the C-terminus of the beta chain, while the remainder of the serine residue undergoes an oxidative deamination to produce ammonia and the pyruvoyl group blocking the N-terminus of the alpha chain.

The enzyme catalyses S-adenosyl-L-methionine + H(+) = S-adenosyl 3-(methylsulfanyl)propylamine + CO2. Its pathway is amine and polyamine biosynthesis; S-adenosylmethioninamine biosynthesis; S-adenosylmethioninamine from S-adenosyl-L-methionine: step 1/1. This is S-adenosylmethionine decarboxylase proenzyme 2 (SAMDC2) from Brassica juncea (Indian mustard).